A 531-amino-acid polypeptide reads, in one-letter code: Protein arginine N-methyltransferase 3 (531 aa).

The interval 1-43 (MCSLASGATGGRGAVENEEDLPELSDSGDEAAWEDEDDADLPH) is disordered. N-acetylcysteine is present on cysteine 2. Residues 16–39 (ENEEDLPELSDSGDEAAWEDEDDA) show a composition bias toward acidic residues. A phosphoserine mark is found at serine 25 and serine 27. A C2H2-type zinc finger spans residues 48–71 (TPCLFCNRLFTSAEETFSHCKSEH). The interaction with ZNF200 stretch occupies residues 48–71 (TPCLFCNRLFTSAEETFSHCKSEH). Serine 171 is modified (phosphoserine). The segment at 186–531 (MKQFAQDFVM…NNSTQTYGLQ (346 aa)) is mediates interaction with ALDH1A1. One can recognise an SAM-dependent MTase PRMT-type domain in the interval 217-531 (DGVYFSSYGH…NNSTQTYGLQ (315 aa)). Residues arginine 239, glycine 263, aspartate 285, isoleucine 313, and glutamate 314 each contribute to the S-adenosyl-L-homocysteine site. Catalysis depends on residues glutamate 329 and glutamate 338. Serine 343 is a binding site for S-adenosyl-L-homocysteine.

The protein belongs to the class I-like SAM-binding methyltransferase superfamily. Protein arginine N-methyltransferase family. Monomer and homodimer. Interacts with EPB41L3 (via FERM domain); the interaction is direct and inhibits the protein-arginine N-methyltransferase activity of PRMT3. Interacts with the 40S ribosomal protein RPS2. Interacts with ALDH1A1; the interaction is direct, inhibits ALDH1A1 aldehyde dehydrogenase activity and is independent of the methyltransferase activity of PRMT3. Interacts (via zinc-finger) with ZNF200 (via C-terminus); the interaction is direct and required to localize PRMT3 to the nucleus and inhibit its proteasomal degradation.

It localises to the cytoplasm. The protein resides in the cytosol. Its subcellular location is the nucleus. It catalyses the reaction L-arginyl-[protein] + S-adenosyl-L-methionine = N(omega)-methyl-L-arginyl-[protein] + S-adenosyl-L-homocysteine + H(+). It carries out the reaction L-arginyl-[protein] + 2 S-adenosyl-L-methionine = N(omega),N(omega)-dimethyl-L-arginyl-[protein] + 2 S-adenosyl-L-homocysteine + 2 H(+). Its activity is regulated as follows. Inhibited by N-ethylmaleimide and high concentrations of zinc chloride. Allosterically inhibited by SGC707. Allosterically inhibited by (1-(benzo[d][1,2,3]thiadiazol- 6-yl)-3-(2-cyclohexenylethyl)urea) and derivatives thereof. Functionally, protein-arginine N-methyltransferase that catalyzes both the monomethylation and asymmetric dimethylation of the guanidino nitrogens of arginine residues in target proteins, and therefore falls into the group of type I methyltransferases. Catalyzes the asymmetric arginine dimethylation at multiple sites in the Arg/Gly-rich region of small ribosomal subunit protein uS5/RPS2. Also appears to methylate other ribosomal proteins. May regulate retinoic acid synthesis and signaling by inhibiting ALDH1A1 retinal dehydrogenase activity. Contributes to methylation of histone H4 'Arg-3', a specific tag for epigenetic transcriptional activation. Mediates asymmetric arginine dimethylation of histone H4 'Arg-3' (H4R3me2a) in the promoter region of miRNA miR-3648, to promote its transcription and osteogenesis. In Homo sapiens (Human), this protein is Protein arginine N-methyltransferase 3.